The following is a 202-amino-acid chain: MPIGVPKVPFRNPGEEGAVWVDVYNRLHRERLLFLGQGVDSEISNQLVGLMVYLSIEDDTRDLYLFINSPGGWVIPGIAIYDTMQFVPPDVHTICMGLAASMGSFLLAGGEITKRLAFPHARVMIHQPASSFYEAQTGEFILEAEELLKLRETITRVYAQRTGNPLWVVFEDMERDVFMSATEAQAHGIVDLVAVENTGDFA.

Ser-101 serves as the catalytic Nucleophile. His-126 is an active-site residue.

This sequence belongs to the peptidase S14 family. Component of the chloroplastic Clp protease core complex.

The protein resides in the plastid. The protein localises to the chloroplast stroma. It carries out the reaction Hydrolysis of proteins to small peptides in the presence of ATP and magnesium. alpha-casein is the usual test substrate. In the absence of ATP, only oligopeptides shorter than five residues are hydrolyzed (such as succinyl-Leu-Tyr-|-NHMec, and Leu-Tyr-Leu-|-Tyr-Trp, in which cleavage of the -Tyr-|-Leu- and -Tyr-|-Trp bonds also occurs).. Its function is as follows. Cleaves peptides in various proteins in a process that requires ATP hydrolysis. Has a chymotrypsin-like activity. Plays a major role in the degradation of misfolded proteins. The sequence is that of ATP-dependent Clp protease proteolytic subunit from Illicium oligandrum (Star anise).